The chain runs to 390 residues: Homoserine O-succinyltransferase (390 aa).

The region spanning 59–369 (NAVLVCHALN…PHGHDAFLLD (311 aa)) is the AB hydrolase-1 domain. Serine 165 acts as the Nucleophile in catalysis. Substrate is bound at residue arginine 235. Catalysis depends on residues aspartate 330 and histidine 363. Residue aspartate 364 participates in substrate binding.

This sequence belongs to the AB hydrolase superfamily. MetX family. In terms of assembly, homodimer.

It is found in the cytoplasm. It carries out the reaction L-homoserine + succinyl-CoA = O-succinyl-L-homoserine + CoA. It participates in amino-acid biosynthesis; L-methionine biosynthesis via de novo pathway; O-succinyl-L-homoserine from L-homoserine: step 1/1. Functionally, transfers a succinyl group from succinyl-CoA to L-homoserine, forming succinyl-L-homoserine. This Cupriavidus metallidurans (strain ATCC 43123 / DSM 2839 / NBRC 102507 / CH34) (Ralstonia metallidurans) protein is Homoserine O-succinyltransferase.